A 664-amino-acid polypeptide reads, in one-letter code: Chaperone protein dnaK1 (664 aa).

Position 198 is a phosphothreonine; by autocatalysis (Thr198).

This sequence belongs to the heat shock protein 70 family.

Acts as a chaperone. This chain is Chaperone protein dnaK1 (dnaK1), found in Prochlorococcus marinus (strain MIT 9313).